Reading from the N-terminus, the 724-residue chain is uncharacterized protein (724 aa).

4 disordered regions span residues 1-23 (MEDREMSTKPESISSRPPEIPDN), 166-477 (PDGY…PPRD), 496-517 (EAHDSGTNTVVPLPDQPEAHGP), and 532-691 (DHPI…PALS). Polar residues-rich tracts occupy residues 227–245 (VSQSSFSPRTEGGPSTVNQ) and 270–296 (STTLGPAMNTFQRTTSPPVMHVTTSDA). Basic and acidic residues predominate over residues 304-322 (TRDHDRYGNGRGPDTDRLE). The segment covering 403–413 (PSSSHSETPNM) has biased composition (polar residues). Basic and acidic residues-rich tracts occupy residues 550 to 560 (RNHEFTEDKRL) and 637 to 657 (LRHDSRVGTPKHLENVHDLAA). The span at 682-691 (RLAAASPALS) shows a compositional bias: low complexity.

This is an uncharacterized protein from Neurospora crassa (strain ATCC 24698 / 74-OR23-1A / CBS 708.71 / DSM 1257 / FGSC 987).